Here is a 109-residue protein sequence, read N- to C-terminus: Prothymosin alpha (109 aa).

Residues 1-109 form a disordered region; it reads MSDTSVDASV…AKKQKTDDDD (109 aa). A compositionally biased stretch (basic and acidic residues) spans 9-35; the sequence is SVEKTTKDLKSKDKELVEETENGKDKP. Residues 41-81 are compositionally biased toward acidic residues; it reads ENEENGEDGADNEEEEEVDEEDEEDEGEGDDDEGDEDDEAD. Over residues 99–109 the composition is skewed to basic and acidic residues; sequence DAKKQKTDDDD.

This sequence belongs to the pro/parathymosin family. In terms of tissue distribution, highly expressed in the testis.

The protein resides in the nucleus. Functionally, may have role in testicular activity. The chain is Prothymosin alpha from Pelophylax lessonae (Pool frog).